The chain runs to 258 residues: 14-3-3-like protein 16R (258 aa).

Positions 238–258 (DMQDDGTDEIKEAAPKPDNNE) are disordered. A compositionally biased stretch (basic and acidic residues) spans 245–258 (DEIKEAAPKPDNNE).

The protein belongs to the 14-3-3 family.

The sequence is that of 14-3-3-like protein 16R from Solanum tuberosum (Potato).